The chain runs to 652 residues: Thioredoxin reductase 3 (652 aa).

Residues 1–12 are compositionally biased toward pro residues; it reads MEKPPSPPPPPR. The tract at residues 1 to 62 is disordered; sequence MEKPPSPPPP…TSRPSSEARE (62 aa). Arg34 is subject to Asymmetric dimethylarginine; alternate. Arg34 carries the omega-N-methylarginine; alternate modification. Ser50 is modified (phosphoserine). Residues 65–165 enclose the Glutaredoxin domain; sequence RRRLRDLIEG…KLLQDDSAHD (101 aa). Residue 167-196 participates in FAD binding; that stretch reads DLIIIGGGSGGLSCAKEAANLGKKVMVLDF. A disulfide bridge connects residues Cys212 and Cys217. Lys388 carries the post-translational modification N6-succinyllysine. His625 acts as the Proton acceptor in catalysis. The segment at residues 650–651 is a cross-link (cysteinyl-selenocysteine (Cys-Sec)); sequence CU. Residue Sec651 is a non-standard amino acid, selenocysteine.

Belongs to the class-I pyridine nucleotide-disulfide oxidoreductase family. Homodimer. FAD is required as a cofactor. Expressed preferentially in testis where it is found in spermatids and spermatocytes but not in sperm. In elongating spermatids, expressed at the site of mitochondrial sheath formation. Low levels in other tissues including heart, lung, liver, kidney, brain, muscle and prostate.

Its subcellular location is the cytoplasm. It localises to the nucleus. The protein resides in the microsome. The protein localises to the endoplasmic reticulum. It carries out the reaction [thioredoxin]-dithiol + NADP(+) = [thioredoxin]-disulfide + NADPH + H(+). Functionally, displays thioredoxin reductase, glutaredoxin and glutathione reductase activities. Catalyzes disulfide bond isomerization. Promotes disulfide bond formation between GPX4 and various sperm proteins and may play a role in sperm maturation by promoting formation of sperm structural components. This is Thioredoxin reductase 3 from Mus musculus (Mouse).